Reading from the N-terminus, the 399-residue chain is Dual specificity mitogen-activated protein kinase kinase 4 (399 aa).

Residues 1-40 (MAAPSPSGGGGSGGGSGSGTPGPVGSPAPGHPAVSSMQGK) form a disordered region. At A2 the chain carries N-acetylalanine. Residues 7-22 (SGGGGSGGGSGSGTPG) are compositionally biased toward gly residues. The d domain stretch occupies residues 37-52 (MQGKRKALKLNFANPP). R58 bears the Asymmetric dimethylarginine; alternate mark. Omega-N-methylarginine; alternate is present on R58. Phosphoserine is present on S90. A Protein kinase domain is found at 102 to 367 (LKDLGEIGRG…YKELLKHPFI (266 aa)). ATP is bound by residues 108 to 116 (IGRGAYGSV) and K131. D229 serves as the catalytic Proton acceptor. Phosphoserine; by MAP3K is present on S257. T261 is subject to Phosphothreonine; by MAP3K. The interval 364–387 (HPFILMYEERAVEVACYVCKILDQ) is DVD domain.

It belongs to the protein kinase superfamily. STE Ser/Thr protein kinase family. MAP kinase kinase subfamily. Interacts with SPAG9. Interacts (via its D domain) with its substrates MAPK8/JNK1, MAPK9/JNK2, MAPK10/JNK3, MAPK11 and MAPK14. Interacts (via its DVD domain) with MAP3Ks activators like MAP3K1/MEKK1 and MAP3K11/MLK3. Interacts with ARRB1, ARRB2 and MAPK8IP3/JIP3. Post-translationally, activated by phosphorylation on Ser-257 and Thr-261 by MAP kinase kinase kinases (MAP3Ks). In terms of tissue distribution, abundant expression is seen in the skeletal muscle. It is also widely expressed in other tissues.

Its subcellular location is the cytoplasm. The protein resides in the nucleus. It carries out the reaction L-seryl-[protein] + ATP = O-phospho-L-seryl-[protein] + ADP + H(+). The enzyme catalyses L-threonyl-[protein] + ATP = O-phospho-L-threonyl-[protein] + ADP + H(+). It catalyses the reaction L-tyrosyl-[protein] + ATP = O-phospho-L-tyrosyl-[protein] + ADP + H(+). Activated in response to a variety of cellular stresses, including UV and gamma-irradiation, heat shock, hyperosmolarity, T-cell receptor stimulation, peroxide and inflammatory cytokines. Also activated by developmental cues. MAP2K4/MKK4 is activated by the majority of MKKKs, such as MAP3K5/ASK1, MAP3K1/MEKK1, MAP3K7/TAK1, MAP3K10/MLK2, MAP3K11/MLK3, MAP3K12/DLK and MAP3K13/LZK. Dual specificity protein kinase which acts as an essential component of the MAP kinase signal transduction pathway. Essential component of the stress-activated protein kinase/c-Jun N-terminal kinase (SAP/JNK) signaling pathway. With MAP2K7/MKK7, is the one of the only known kinase to directly activate the stress-activated protein kinase/c-Jun N-terminal kinases MAPK8/JNK1, MAPK9/JNK2 and MAPK10/JNK3. MAP2K4/MKK4 and MAP2K7/MKK7 both activate the JNKs by phosphorylation, but they differ in their preference for the phosphorylation site in the Thr-Pro-Tyr motif. MAP2K4 shows preference for phosphorylation of the Tyr residue and MAP2K7/MKK7 for the Thr residue. The phosphorylation of the Thr residue by MAP2K7/MKK7 seems to be the prerequisite for JNK activation at least in response to pro-inflammatory cytokines, while other stimuli activate both MAP2K4/MKK4 and MAP2K7/MKK7 which synergistically phosphorylate JNKs. MAP2K4 is required for maintaining peripheral lymphoid homeostasis. The MKK/JNK signaling pathway is also involved in mitochondrial death signaling pathway, including the release cytochrome c, leading to apoptosis. Whereas MAP2K7/MKK7 exclusively activates JNKs, MAP2K4/MKK4 additionally activates the p38 MAPKs MAPK11, MAPK12, MAPK13 and MAPK14. The sequence is that of Dual specificity mitogen-activated protein kinase kinase 4 (MAP2K4) from Homo sapiens (Human).